The primary structure comprises 129 residues: D-ribose pyranase (129 aa).

The active-site Proton donor is the histidine 20. Residues aspartate 28, histidine 96, and 118-120 (YAN) contribute to the substrate site.

Belongs to the RbsD / FucU family. RbsD subfamily. In terms of assembly, homodecamer.

The protein resides in the cytoplasm. It catalyses the reaction beta-D-ribopyranose = beta-D-ribofuranose. It functions in the pathway carbohydrate metabolism; D-ribose degradation; D-ribose 5-phosphate from beta-D-ribopyranose: step 1/2. Its function is as follows. Catalyzes the interconversion of beta-pyran and beta-furan forms of D-ribose. This Streptomyces avermitilis (strain ATCC 31267 / DSM 46492 / JCM 5070 / NBRC 14893 / NCIMB 12804 / NRRL 8165 / MA-4680) protein is D-ribose pyranase.